Reading from the N-terminus, the 235-residue chain is Aspartate/glutamate leucyltransferase (235 aa).

This sequence belongs to the R-transferase family. Bpt subfamily.

Its subcellular location is the cytoplasm. The catalysed reaction is N-terminal L-glutamyl-[protein] + L-leucyl-tRNA(Leu) = N-terminal L-leucyl-L-glutamyl-[protein] + tRNA(Leu) + H(+). The enzyme catalyses N-terminal L-aspartyl-[protein] + L-leucyl-tRNA(Leu) = N-terminal L-leucyl-L-aspartyl-[protein] + tRNA(Leu) + H(+). Functions in the N-end rule pathway of protein degradation where it conjugates Leu from its aminoacyl-tRNA to the N-termini of proteins containing an N-terminal aspartate or glutamate. This chain is Aspartate/glutamate leucyltransferase, found in Pseudomonas fluorescens (strain ATCC BAA-477 / NRRL B-23932 / Pf-5).